Reading from the N-terminus, the 700-residue chain is Probable transcription factor FUP6 (700 aa).

2 disordered regions span residues 343–364 and 577–624; these read SEAG…NRHS and FDSV…PLNQ. A compositionally biased stretch (polar residues) spans 577-595; sequence FDSVHSGRDSVSSAMNYQS. Basic and acidic residues predominate over residues 596 to 607; the sequence is DSRKRARLDTES. The span at 608–623 shows a compositional bias: polar residues; it reads NPRSSQRNDGSGQPLN.

It localises to the nucleus. Probable transcrition factor; part of the gene cluster that mediates the biosynthesis of the mycotoxin fusaproliferin (FUP) that belongs to the class of bicyclic sesterterpenoids. The chain is Probable transcription factor FUP6 from Fusarium proliferatum (strain ET1) (Orchid endophyte fungus).